Consider the following 956-residue polypeptide: RNA-silencing factor ers1 (956 aa).

Its subcellular location is the cytoplasm. It is found in the cytoskeleton. The protein resides in the microtubule organizing center. It localises to the spindle pole body. In terms of biological role, involved in RNAi-dependent heterochromatin formation and centromeric silencing. Required for the conversion of centromeric pre-small interfering RNA transcripts into small interfering RNAs, histone H3 'Lys9' methylation, and the recruitment of the RITS complex to centromeric sequences. This Schizosaccharomyces pombe (strain 972 / ATCC 24843) (Fission yeast) protein is RNA-silencing factor ers1 (ers1).